The sequence spans 989 residues: Autotransporter adhesin/invasin TibA (989 aa).

An N-terminal signal peptide occupies residues 1–54; it reads MNKVYNTVWNESTGTWVVTSELTRKGGLRPRQIKRTVLAGLIAGLLMPSMPALA. O-alpha-linked (D-glycero-D-manno-heptose) serine glycans are attached at residues Ser74, Ser86, Ser93, Ser94, Ser97, Ser100, Ser112, Ser113, Ser116, Ser119, Ser124, Ser131, Ser132, and Ser135. A run of 12 repeats spans residues 82–100, 101–119, 120–138, 139–157, 158–176, 177–195, 196–214, 215–233, 234–251, 252–270, 271–289, and 290–308. Positions 82–308 are 12 X 19 AA approximate repeats; sequence TTINSGGKQY…QVEAGGSASK (227 aa). Polar residues predominate over residues 110-123; the sequence is HVSSGGSATSSTIN. The disordered stretch occupies residues 110 to 146; that stretch reads HVSSGGSATSSTINSGGHQHVSSGGSATNTTVNNGGR. A compositionally biased stretch (low complexity) spans 124–135; sequence SGGHQHVSSGGS. A compositionally biased stretch (polar residues) spans 136–146; it reads ATNTTVNNGGR. O-alpha-linked (D-glycero-D-manno-heptose) serine glycans are attached at residues Ser151, Ser154, Ser162, Ser170, Ser176, Ser181, Ser188, Ser189, Ser200, Ser226, Ser227, Ser230, Ser238, Ser248, Ser263, Ser264, Ser275, Ser294, Ser305, Ser313, and Ser322. Residues 623-686 are disordered; it reads WYLKADTPPP…GTSSSPVRRT (64 aa). A compositionally biased stretch (pro residues) spans 629–638; sequence TPPPVTPPTN. Repeat copies occupy residues 639–643, 644–648, 649–653, 654–658, 659–663, 664–668, 669–673, and 674–678. Positions 639-667 are enriched in low complexity; sequence PDADNPDAGNPDAGNPDAGNPDAGNPDAG. An 8 X 5 AA repeats of P-[DG]-[AGT]-[DGA]-[NKT] region spans residues 639–678; sequence PDADNPDAGNPDAGNPDAGNPDAGNPDAGKPGTGKPDAGT. Residues 721–989 form the Autotransporter domain; that stretch reads NTRAPGGVWG…TGGVGFRINF (269 aa).

In terms of assembly, homohexamer. Glycosylated by TibC. Glycosylation is required for adhesion to and invasion of host cells. Glycosylation is dispensable for bacterial autoaggregation and biofilm formation.

The protein resides in the cell outer membrane. Functionally, mediates both adhesion to and invasion of human intestine epithelial cells. Also mediates bacterial cell aggregation via intercellular TibA-TibA interaction. Enhances biofilm formation. This chain is Autotransporter adhesin/invasin TibA, found in Escherichia coli O78:H11 (strain H10407 / ETEC).